Reading from the N-terminus, the 194-residue chain is Imidazoleglycerol-phosphate dehydratase (194 aa).

Belongs to the imidazoleglycerol-phosphate dehydratase family.

It localises to the cytoplasm. The catalysed reaction is D-erythro-1-(imidazol-4-yl)glycerol 3-phosphate = 3-(imidazol-4-yl)-2-oxopropyl phosphate + H2O. It functions in the pathway amino-acid biosynthesis; L-histidine biosynthesis; L-histidine from 5-phospho-alpha-D-ribose 1-diphosphate: step 6/9. The protein is Imidazoleglycerol-phosphate dehydratase of Rubrobacter xylanophilus (strain DSM 9941 / JCM 11954 / NBRC 16129 / PRD-1).